We begin with the raw amino-acid sequence, 256 residues long: DNA repair protein RecO (256 aa).

It belongs to the RecO family.

Involved in DNA repair and RecF pathway recombination. The sequence is that of DNA repair protein RecO from Pelotomaculum thermopropionicum (strain DSM 13744 / JCM 10971 / SI).